The sequence spans 312 residues: ECF RNA polymerase sigma factor SigJ (312 aa).

The interval 6 to 65 (FEALRQHLMSVAYRLTGTVADAEDIVQEAWLRWDSPDTVIADPRAWLTTVVSRLGLDKLR) is sigma-70 factor domain-2. The short motif at 29–32 (DIVQ) is the Polymerase core binding element. The interval 107–155 (MVVLERLRPDQRVAFVLHDGFAVPFAEVAEVLGTSEAAARQLASRARKA) is sigma-70 factor domain-4. The H-T-H motif DNA-binding region spans 131–150 (FAEVAEVLGTSEAAARQLAS). A disordered region spans residues 293 to 312 (GSPLKERRAQPTGRGRHHRN).

Belongs to the sigma-70 factor family. ECF subfamily. As to quaternary structure, interacts transiently with the RNA polymerase catalytic core formed by RpoA, RpoB, RpoC and RpoZ (2 alpha, 1 beta, 1 beta' and 1 omega subunit) to form the RNA polymerase holoenzyme that can initiate transcription.

Its function is as follows. Sigma factors are initiation factors that promote the attachment of RNA polymerase to specific initiation sites and are then released. Extracytoplasmic function (ECF) sigma factors are held in an inactive form by an anti-sigma factor until released, although no anti-sigma factor is known for this protein. Regulates the promoter of SigI, may not be autoregulated. The sequence is that of ECF RNA polymerase sigma factor SigJ (sigJ) from Mycobacterium tuberculosis (strain ATCC 25618 / H37Rv).